Reading from the N-terminus, the 674-residue chain is MDMETSWRFLRSVCLLSFILGSFSVYQTLCLVDAQEDAIVTLQVDASNVTRRPIPETLFGIFFEEINHAGAGGLWAELVSNRGFEAGGQIIPSNIWPWSIIGDESSIYVVTDRSSCFERNKIALRMEVLCDSNSCPLGGVGVYNPGYWGMNIEEGKKYKVVLYVRSTGDIDVSVSFTSSNGSVTLASENIIALASDLLNWTKKEMLLEANGTDNGARLQFTTTKKGSIWFDQVSAMPMDTYKGHGFRNDLFQMMVDLKPRFIRFPGGCFVEGDWLGNAFRWKETVRAWEERPGHYGDVWKYWTDDGLGHFEFFQLAEDLGASPIWVFNNGISHNDQVETKNVMPFVQEAIDGIEFARGDSNSTWGSVRAAMGHPEPFELKYVAVGNEDCFKSYYRGNYLEFYNAIKKAYPDIKIISNCDASAKPLDHPADYFDYHIYTLARDLFSKSHDFDNTPRNGPKAFVSEYAVNKADAKNGNLLAALGEAAFLLGLEKNSDIVEMVSYAPLFVNTNDRRWIPDAIVFNSSHLYGTPSYWVQHFFTESSGATLLNSTLKGKTSSVEASAISFQTNGKDYIQIKAVNFGEQSVNLKVAVTGLMAKFYGSKKKVLTSASVMDENSFSNPNMIVPQESLLEMTEQEDLMFVLPPHSFSSFDLLTESENVIKMPISDSYKKTSTM.

A signal peptide spans 1 to 24 (MDMETSWRFLRSVCLLSFILGSFS). Residues asparagine 48, asparagine 180, asparagine 199, asparagine 210, asparagine 361, asparagine 522, and asparagine 548 are each glycosylated (N-linked (GlcNAc...) asparagine).

The protein belongs to the glycosyl hydrolase 51 family. High expression in flowers, siliques and stems. Observed in the vasculature of older root tissue, at the tip of anthers and in the petal blade of fully developed flowers, in floral abscission zones and in silique replum tissue. Expressed in the cambium and phloem, but not in the xylem or in the vascular system of floral tissues.

The protein localises to the secreted. It localises to the extracellular space. It is found in the extracellular matrix. It catalyses the reaction Hydrolysis of terminal non-reducing alpha-L-arabinofuranoside residues in alpha-L-arabinosides.. In terms of biological role, may be involved in the coordinated dissolution of the cell wall matrix during abscission and in the secondary cell wall formation in xylem vessels. This Arabidopsis thaliana (Mouse-ear cress) protein is Alpha-L-arabinofuranosidase 2 (ASD2).